The following is an 80-amino-acid chain: Cell division activator CedA (80 aa).

This sequence belongs to the CedA family.

Functionally, activates the cell division inhibited by chromosomal DNA over-replication. The chain is Cell division activator CedA from Escherichia coli O1:K1 / APEC.